The chain runs to 838 residues: Adenylate cyclase (838 aa).

A catalytic region spans residues 1-541; that stretch reads MNYDLFSAQK…DLRLSFPVTV (541 aa). The tract at residues 547–838 is regulatory; the sequence is EDLTHACEIR…VPFHSRLAMS (292 aa).

The protein belongs to the adenylyl cyclase class-1 family.

The protein resides in the cytoplasm. It catalyses the reaction ATP = 3',5'-cyclic AMP + diphosphate. The chain is Adenylate cyclase (cya) from Pasteurella multocida (strain Pm70).